A 341-amino-acid chain; its full sequence is Retinol dehydrogenase 10 (341 aa).

A helical; Signal-anchor membrane pass occupies residues 3 to 23 (IVLEFFLVTFKVLWAFVLAAA). 40–64 (LITGAGSGLGRLFALEFARRRAQLV) lines the NADP(+) pocket. S197 lines the substrate pocket. Residue Y210 is the Proton acceptor of the active site.

This sequence belongs to the short-chain dehydrogenases/reductases (SDR) family.

Its subcellular location is the microsome membrane. The protein localises to the endoplasmic reticulum membrane. The enzyme catalyses all-trans-retinol + NADP(+) = all-trans-retinal + NADPH + H(+). Its pathway is cofactor metabolism; retinol metabolism. Retinol dehydrogenase with a clear preference for NADP. Converts all-trans-retinol to all-trans-retinal. Has no detectable activity towards 11-cis-retinol, 9-cis-retinol and 13-cis-retinol. The protein is Retinol dehydrogenase 10 (rdh10) of Xenopus tropicalis (Western clawed frog).